Reading from the N-terminus, the 111-residue chain is Aspartate 1-decarboxylase (111 aa).

Ser-25 acts as the Schiff-base intermediate with substrate; via pyruvic acid in catalysis. Ser-25 bears the Pyruvic acid (Ser) mark. Residue Thr-57 coordinates substrate. Tyr-58 (proton donor) is an active-site residue. 73-75 (GPA) contributes to the substrate binding site.

This sequence belongs to the PanD family. Heterooctamer of four alpha and four beta subunits. Requires pyruvate as cofactor. Is synthesized initially as an inactive proenzyme, which is activated by self-cleavage at a specific serine bond to produce a beta-subunit with a hydroxyl group at its C-terminus and an alpha-subunit with a pyruvoyl group at its N-terminus.

It localises to the cytoplasm. It carries out the reaction L-aspartate + H(+) = beta-alanine + CO2. The protein operates within cofactor biosynthesis; (R)-pantothenate biosynthesis; beta-alanine from L-aspartate: step 1/1. In terms of biological role, catalyzes the pyruvoyl-dependent decarboxylation of aspartate to produce beta-alanine. This chain is Aspartate 1-decarboxylase, found in Francisella tularensis subsp. holarctica (strain LVS).